The primary structure comprises 177 residues: MIFFAETQTAGVPEIITSLFPNLPNFIAHVIATIVLVVILSKLMYKPFRKTIKDRRNKINELLSEAVQKQTEANIGVRKAEALLQDAKTESSLIIQTSKVDADIQKTHIISEAHKYADIIKNQAEKDIAQERSKIEAEIKTTIVNVAFDAAEQILQTEINKTKNKKIVDEFIENLDK.

Residues 19-39 (LFPNLPNFIAHVIATIVLVVI) traverse the membrane as a helical segment.

This sequence belongs to the ATPase B chain family. As to quaternary structure, F-type ATPases have 2 components, F(1) - the catalytic core - and F(0) - the membrane proton channel. F(1) has five subunits: alpha(3), beta(3), gamma(1), delta(1), epsilon(1). F(0) has three main subunits: a(1), b(2) and c(10-14). The alpha and beta chains form an alternating ring which encloses part of the gamma chain. F(1) is attached to F(0) by a central stalk formed by the gamma and epsilon chains, while a peripheral stalk is formed by the delta and b chains.

Its subcellular location is the cell membrane. Its function is as follows. F(1)F(0) ATP synthase produces ATP from ADP in the presence of a proton or sodium gradient. F-type ATPases consist of two structural domains, F(1) containing the extramembraneous catalytic core and F(0) containing the membrane proton channel, linked together by a central stalk and a peripheral stalk. During catalysis, ATP synthesis in the catalytic domain of F(1) is coupled via a rotary mechanism of the central stalk subunits to proton translocation. Component of the F(0) channel, it forms part of the peripheral stalk, linking F(1) to F(0). The protein is ATP synthase subunit b of Mesoplasma florum (strain ATCC 33453 / NBRC 100688 / NCTC 11704 / L1) (Acholeplasma florum).